We begin with the raw amino-acid sequence, 288 residues long: Protoheme IX farnesyltransferase 2 (288 aa).

Transmembrane regions (helical) follow at residues 16 to 36 (IGVFCALAAIAGALATPGAVP), 38 to 58 (FAPVMAVALAVLLSAAAAGAF), 88 to 108 (LWPLGLLALTVAAVALAAFAA), 111 to 131 (WAALHVFLGAFVYGIVYTVWL), 139 to 159 (IVIGGLSGSFAVLAGAAVAVP), 166 to 186 (LILALVLFLWTPPHFWSLATA), 227 to 247 (AFFGAGPLYLGAAILGGGWFL), and 266 to 286 (FFASLIQLVLLLTAVMVEPLL).

It belongs to the UbiA prenyltransferase family. Protoheme IX farnesyltransferase subfamily.

Its subcellular location is the cell inner membrane. The enzyme catalyses heme b + (2E,6E)-farnesyl diphosphate + H2O = Fe(II)-heme o + diphosphate. It participates in porphyrin-containing compound metabolism; heme O biosynthesis; heme O from protoheme: step 1/1. Functionally, converts heme B (protoheme IX) to heme O by substitution of the vinyl group on carbon 2 of heme B porphyrin ring with a hydroxyethyl farnesyl side group. The sequence is that of Protoheme IX farnesyltransferase 2 from Paramagnetospirillum magneticum (strain ATCC 700264 / AMB-1) (Magnetospirillum magneticum).